The primary structure comprises 254 residues: Leucyl/phenylalanyl-tRNA--protein transferase (254 aa).

This sequence belongs to the L/F-transferase family.

The protein resides in the cytoplasm. It carries out the reaction N-terminal L-lysyl-[protein] + L-leucyl-tRNA(Leu) = N-terminal L-leucyl-L-lysyl-[protein] + tRNA(Leu) + H(+). The enzyme catalyses N-terminal L-arginyl-[protein] + L-leucyl-tRNA(Leu) = N-terminal L-leucyl-L-arginyl-[protein] + tRNA(Leu) + H(+). The catalysed reaction is L-phenylalanyl-tRNA(Phe) + an N-terminal L-alpha-aminoacyl-[protein] = an N-terminal L-phenylalanyl-L-alpha-aminoacyl-[protein] + tRNA(Phe). Functionally, functions in the N-end rule pathway of protein degradation where it conjugates Leu, Phe and, less efficiently, Met from aminoacyl-tRNAs to the N-termini of proteins containing an N-terminal arginine or lysine. The chain is Leucyl/phenylalanyl-tRNA--protein transferase from Burkholderia vietnamiensis (strain G4 / LMG 22486) (Burkholderia cepacia (strain R1808)).